Consider the following 275-residue polypeptide: Acetyl-coenzyme A carboxylase carboxyl transferase subunit beta (275 aa).

Residues 18–275 (KDNAGPAVPS…IHRLGGEMHA (258 aa)) form the CoA carboxyltransferase N-terminal domain. The tract at residues 23–47 (PAVPSNTHSSKSNGNPVSEMKENKR) is disordered. The segment covering 26-38 (PSNTHSSKSNGNP) has biased composition (polar residues).

Belongs to the AccD/PCCB family. As to quaternary structure, acetyl-CoA carboxylase is a heterohexamer composed of biotin carboxyl carrier protein (AccB), biotin carboxylase (AccC) and two subunits each of ACCase subunit alpha (AccA) and ACCase subunit beta (AccD).

Its subcellular location is the cytoplasm. It catalyses the reaction N(6)-carboxybiotinyl-L-lysyl-[protein] + acetyl-CoA = N(6)-biotinyl-L-lysyl-[protein] + malonyl-CoA. It functions in the pathway lipid metabolism; malonyl-CoA biosynthesis; malonyl-CoA from acetyl-CoA: step 1/1. Its function is as follows. Component of the acetyl coenzyme A carboxylase (ACC) complex. Biotin carboxylase (BC) catalyzes the carboxylation of biotin on its carrier protein (BCCP) and then the CO(2) group is transferred by the transcarboxylase to acetyl-CoA to form malonyl-CoA. The polypeptide is Acetyl-coenzyme A carboxylase carboxyl transferase subunit beta (Alkaliphilus oremlandii (strain OhILAs) (Clostridium oremlandii (strain OhILAs))).